Here is a 446-residue protein sequence, read N- to C-terminus: Tubulin gamma chain (446 aa).

142–148 lines the GTP pocket; sequence AGGTGSG.

Belongs to the tubulin family.

The protein resides in the cytoplasm. The protein localises to the cytoskeleton. Its subcellular location is the microtubule organizing center. It localises to the spindle pole body. In terms of biological role, tubulin is the major constituent of microtubules. The gamma chain is found at microtubule organizing centers (MTOC) such as the spindle poles or the centrosome, suggesting that it is involved in the minus-end nucleation of microtubule assembly. The chain is Tubulin gamma chain (tug1) from Schizosaccharomyces japonicus (Fission yeast).